We begin with the raw amino-acid sequence, 197 residues long: RNA chaperone ProQ (197 aa).

Residues 115–138 are disordered; sequence RAAAKKAQQKKHPRKPANKNLKKE. The segment covering 117-131 has biased composition (basic residues); the sequence is AAKKAQQKKHPRKPA.

It belongs to the ProQ family.

It is found in the cytoplasm. RNA chaperone with significant RNA binding, RNA strand exchange and RNA duplexing activities. The sequence is that of RNA chaperone ProQ from Haemophilus influenzae (strain ATCC 51907 / DSM 11121 / KW20 / Rd).